The chain runs to 174 residues: MTTIVSVRRDGHVVIGGDGQVTLGNTVMKGNAKKVRRLYNNKVIAGFAGGTADAFTLFELFERKLEMHQGHLTKAAVELAKDWRTDRMLRKLEALLAVADETASLIITGNGDVVQPEDDLIAIGSGGPYAQSAARALLENTELGARDIVEKSLSIAGDICIYTNRFQTIEELTY.

Thr-2 is an active-site residue. Residues Gly-157, Cys-160, and Thr-163 each contribute to the Na(+) site.

The protein belongs to the peptidase T1B family. HslV subfamily. In terms of assembly, a double ring-shaped homohexamer of HslV is capped on each side by a ring-shaped HslU homohexamer. The assembly of the HslU/HslV complex is dependent on binding of ATP.

Its subcellular location is the cytoplasm. It carries out the reaction ATP-dependent cleavage of peptide bonds with broad specificity.. With respect to regulation, allosterically activated by HslU binding. Functionally, protease subunit of a proteasome-like degradation complex believed to be a general protein degrading machinery. This chain is ATP-dependent protease subunit HslV, found in Yersinia pseudotuberculosis serotype I (strain IP32953).